We begin with the raw amino-acid sequence, 295 residues long: Acetylglutamate kinase (295 aa).

Substrate-binding positions include 64–65 (GG), Arg-86, and Asn-179.

Belongs to the acetylglutamate kinase family. ArgB subfamily.

Its subcellular location is the cytoplasm. The catalysed reaction is N-acetyl-L-glutamate + ATP = N-acetyl-L-glutamyl 5-phosphate + ADP. It participates in amino-acid biosynthesis; L-arginine biosynthesis; N(2)-acetyl-L-ornithine from L-glutamate: step 2/4. Its function is as follows. Catalyzes the ATP-dependent phosphorylation of N-acetyl-L-glutamate. The sequence is that of Acetylglutamate kinase from Thermosynechococcus vestitus (strain NIES-2133 / IAM M-273 / BP-1).